The chain runs to 323 residues: Di/tripeptide transport ATP-binding protein DppF (323 aa).

The ABC transporter domain occupies 5–254; sequence LTARDLTRHY…PLHPYTRALL (250 aa). 47-54 is a binding site for ATP; the sequence is GESGCGKS.

The protein belongs to the ABC transporter superfamily. In terms of assembly, the complex is composed of two ATP-binding proteins (DppD and DppF), two transmembrane proteins (DppB and DppC) and a solute-binding protein (DppA1-A5). Five orthologous SBPs (DppA1-A5) are present in P.aeruginosa, which increases the substrate specificity of the DppBCDF transporter.

The protein localises to the cell inner membrane. The catalysed reaction is a dipeptide(out) + ATP + H2O = a dipeptide(in) + ADP + phosphate + H(+). Part of the ABC transporter DppABCDF involved in the uptake of various di/tripeptides. Is also involved in the uptake of phaseolotoxin, a toxic tripeptide inhibiting the enzyme ornithine carbamoyltransferase. Responsible for energy coupling to the transport system. The chain is Di/tripeptide transport ATP-binding protein DppF from Pseudomonas aeruginosa (strain UCBPP-PA14).